Consider the following 969-residue polypeptide: Leucine--tRNA ligase (969 aa).

A disordered region spans residues 1–23 (MTESPTTSPATGSGAAAPDSDAP). Positions 78-89 (PYPSGEGLHVGH) match the 'HIGH' region motif. The 'KMSKS' region motif lies at 737–741 (KIGKS). Position 740 (K740) interacts with ATP.

The protein belongs to the class-I aminoacyl-tRNA synthetase family.

The protein localises to the cytoplasm. The enzyme catalyses tRNA(Leu) + L-leucine + ATP = L-leucyl-tRNA(Leu) + AMP + diphosphate. The chain is Leucine--tRNA ligase from Mycobacterium avium (strain 104).